The primary structure comprises 177 residues: Large ribosomal subunit protein uL6 (177 aa).

This sequence belongs to the universal ribosomal protein uL6 family. In terms of assembly, part of the 50S ribosomal subunit.

Functionally, this protein binds to the 23S rRNA, and is important in its secondary structure. It is located near the subunit interface in the base of the L7/L12 stalk, and near the tRNA binding site of the peptidyltransferase center. The protein is Large ribosomal subunit protein uL6 of Vibrio atlanticus (strain LGP32) (Vibrio splendidus (strain Mel32)).